Reading from the N-terminus, the 444-residue chain is UDP-N-acetylmuramate--L-alanine ligase (444 aa).

Gly-110–Ser-116 serves as a coordination point for ATP.

The protein belongs to the MurCDEF family.

The protein resides in the cytoplasm. It carries out the reaction UDP-N-acetyl-alpha-D-muramate + L-alanine + ATP = UDP-N-acetyl-alpha-D-muramoyl-L-alanine + ADP + phosphate + H(+). Its pathway is cell wall biogenesis; peptidoglycan biosynthesis. Cell wall formation. The sequence is that of UDP-N-acetylmuramate--L-alanine ligase from Streptococcus pneumoniae (strain P1031).